Here is a 251-residue protein sequence, read N- to C-terminus: 5'-nucleotidase SurE (251 aa).

Residues Asp-8, Asp-9, Ser-40, and Asn-95 each contribute to the a divalent metal cation site.

This sequence belongs to the SurE nucleotidase family. Requires a divalent metal cation as cofactor.

Its subcellular location is the cytoplasm. The enzyme catalyses a ribonucleoside 5'-phosphate + H2O = a ribonucleoside + phosphate. Nucleotidase that shows phosphatase activity on nucleoside 5'-monophosphates. The polypeptide is 5'-nucleotidase SurE (Desulfitobacterium hafniense (strain DSM 10664 / DCB-2)).